The following is a 558-amino-acid chain: Trehalase 1 (558 aa).

Belongs to the glycosyl hydrolase 15 family.

It carries out the reaction alpha,alpha-trehalose + H2O = alpha-D-glucose + beta-D-glucose. The protein operates within glycan degradation; trehalose degradation; D-glucose from alpha,alpha-trehalose: step 1/1. Catalyzes the hydrolysis of alpha,alpha-trehalose into two molecules of D-glucose. This chain is Trehalase 1 (treH1), found in Sulfolobus acidocaldarius (strain ATCC 33909 / DSM 639 / JCM 8929 / NBRC 15157 / NCIMB 11770).